The primary structure comprises 336 residues: Tetraacyldisaccharide 4'-kinase (336 aa).

ATP is bound at residue 58-65 (AVGGSGKT).

The protein belongs to the LpxK family.

The enzyme catalyses a lipid A disaccharide + ATP = a lipid IVA + ADP + H(+). It functions in the pathway glycolipid biosynthesis; lipid IV(A) biosynthesis; lipid IV(A) from (3R)-3-hydroxytetradecanoyl-[acyl-carrier-protein] and UDP-N-acetyl-alpha-D-glucosamine: step 6/6. Its function is as follows. Transfers the gamma-phosphate of ATP to the 4'-position of a tetraacyldisaccharide 1-phosphate intermediate (termed DS-1-P) to form tetraacyldisaccharide 1,4'-bis-phosphate (lipid IVA). The sequence is that of Tetraacyldisaccharide 4'-kinase from Aromatoleum aromaticum (strain DSM 19018 / LMG 30748 / EbN1) (Azoarcus sp. (strain EbN1)).